Consider the following 358-residue polypeptide: Thiol protease aleurain-like (358 aa).

Residues 1–21 (MSVKLNLSSSILLILFAAAAS) form the signal peptide. A propeptide spans 22–140 (KEIGFDESNP…KGSHKITEAT (119 aa)) (activation peptide). A glycan (N-linked (GlcNAc...) asparagine) is linked at Asn-125. 2 disulfide bridges follow: Cys-162–Cys-205 and Cys-196–Cys-238. Cys-165 is a catalytic residue. Asn-254 carries an N-linked (GlcNAc...) asparagine glycan. Cys-296 and Cys-346 form a disulfide bridge. Residues His-305 and Asn-325 contribute to the active site.

Belongs to the peptidase C1 family.

It is found in the vacuole. It catalyses the reaction Hydrolysis of proteins, acting as an aminopeptidase (notably, cleaving Arg-|-Xaa bonds) as well as an endopeptidase.. Functionally, may play a role in proteolysis leading to mobilization of nitrogen during senescence and starvation. In Arabidopsis thaliana (Mouse-ear cress), this protein is Thiol protease aleurain-like.